The sequence spans 327 residues: Glycerol-3-phosphate dehydrogenase [NAD(P)+] (327 aa).

NADPH contacts are provided by Trp16, Arg36, and Lys108. Sn-glycerol 3-phosphate contacts are provided by Lys108, Gly136, and Ser138. Ala140 is a binding site for NADPH. Sn-glycerol 3-phosphate contacts are provided by Lys191, Asp244, Ser254, Arg255, and Asn256. The active-site Proton acceptor is the Lys191. An NADPH-binding site is contributed by Arg255. NADPH is bound by residues Leu274 and Glu276.

Belongs to the NAD-dependent glycerol-3-phosphate dehydrogenase family.

The protein resides in the cytoplasm. The enzyme catalyses sn-glycerol 3-phosphate + NAD(+) = dihydroxyacetone phosphate + NADH + H(+). It carries out the reaction sn-glycerol 3-phosphate + NADP(+) = dihydroxyacetone phosphate + NADPH + H(+). Its pathway is membrane lipid metabolism; glycerophospholipid metabolism. Catalyzes the reduction of the glycolytic intermediate dihydroxyacetone phosphate (DHAP) to sn-glycerol 3-phosphate (G3P), the key precursor for phospholipid synthesis. This chain is Glycerol-3-phosphate dehydrogenase [NAD(P)+], found in Bradyrhizobium sp. (strain ORS 278).